A 313-amino-acid chain; its full sequence is D-alanine--D-alanine ligase (313 aa).

Positions 114 to 309 constitute an ATP-grasp domain; sequence KWLWKGVGLP…FSKLVLKLIS (196 aa). 142–195 contributes to the ATP binding site; it reads DLTFPVIVKPSHEGSSIGMRKVDTLDALQEAVDFAQQYDSEILIEQWITGREFT. Mg(2+)-binding residues include Asp263, Glu276, and Asn278.

It belongs to the D-alanine--D-alanine ligase family. Mg(2+) is required as a cofactor. It depends on Mn(2+) as a cofactor.

It localises to the cytoplasm. It catalyses the reaction 2 D-alanine + ATP = D-alanyl-D-alanine + ADP + phosphate + H(+). Its pathway is cell wall biogenesis; peptidoglycan biosynthesis. Functionally, cell wall formation. The polypeptide is D-alanine--D-alanine ligase (Hydrogenovibrio crunogenus (strain DSM 25203 / XCL-2) (Thiomicrospira crunogena)).